A 253-amino-acid polypeptide reads, in one-letter code: Glucosamine-6-phosphate deaminase (253 aa).

The active-site Proton acceptor; for enolization step is Asp-65. Asn-133 (for ring-opening step) is an active-site residue. His-135 functions as the Proton acceptor; for ring-opening step in the catalytic mechanism. Glu-140 (for ring-opening step) is an active-site residue.

Belongs to the glucosamine/galactosamine-6-phosphate isomerase family. NagB subfamily.

The enzyme catalyses alpha-D-glucosamine 6-phosphate + H2O = beta-D-fructose 6-phosphate + NH4(+). It participates in amino-sugar metabolism; N-acetylneuraminate degradation; D-fructose 6-phosphate from N-acetylneuraminate: step 5/5. In terms of biological role, catalyzes the reversible isomerization-deamination of glucosamine 6-phosphate (GlcN6P) to form fructose 6-phosphate (Fru6P) and ammonium ion. This Corynebacterium glutamicum (strain ATCC 13032 / DSM 20300 / JCM 1318 / BCRC 11384 / CCUG 27702 / LMG 3730 / NBRC 12168 / NCIMB 10025 / NRRL B-2784 / 534) protein is Glucosamine-6-phosphate deaminase.